The chain runs to 123 residues: Histone H2B (123 aa).

The interval 1-30 is disordered; the sequence is MPPKTSGKAAKKAGKAQKNITKTDKKKKRR. P2 is subject to N-methylproline; partial. The residue at position 44 (K44) is an N6-succinyllysine. S110 carries O-linked (GlcNAc) serine glycosylation. N6-succinyllysine occurs at positions 114 and 118. K118 is covalently cross-linked (Glycyl lysine isopeptide (Lys-Gly) (interchain with G-Cter in ubiquitin)).

It belongs to the histone H2B family. In terms of assembly, the nucleosome is a histone octamer containing two molecules each of H2A, H2B, H3 and H4 assembled in one H3-H4 heterotetramer and two H2A-H2B heterodimers. The octamer wraps approximately 147 bp of DNA. In terms of processing, phosphorylated by the catalytic component of the Dbf4-dependent kinase (DDK) complex Cdc7. Monoubiquitination of Lys-118 by Bre1 gives a specific tag for epigenetic transcriptional activation and is also prerequisite for histone H3 'Lys-4' and 'Lys-79' methylation. Deubiquitination of Lys-118 by the SAGA complex is involved in activating transcription of a large subset of genes. Post-translationally, methylation at Pro-2 increases upon heat shock. In terms of processing, glcNAcylation at Ser-110 promotes monoubiquitination of Lys-118. It fluctuates in response to extracellular glucose, and associates with transcribed genes.

The protein localises to the nucleus. Its subcellular location is the chromosome. In terms of biological role, core component of nucleosome. Nucleosomes wrap and compact DNA into chromatin, limiting DNA accessibility to the cellular machineries which require DNA as a template. Histones thereby play a central role in transcription regulation, DNA repair, DNA replication and chromosomal stability. DNA accessibility is regulated via a complex set of post-translational modifications of histones, also called histone code, and nucleosome remodeling. The chain is Histone H2B (His2B) from Drosophila yakuba (Fruit fly).